Consider the following 225-residue polypeptide: DNA repair protein RecO (225 aa).

The protein belongs to the RecO family.

Its function is as follows. Involved in DNA repair and RecF pathway recombination. The chain is DNA repair protein RecO from Clostridium perfringens (strain ATCC 13124 / DSM 756 / JCM 1290 / NCIMB 6125 / NCTC 8237 / Type A).